The primary structure comprises 70 residues: Cytoinsectotoxin-2c (70 aa).

The protein belongs to the cationic peptide 06 (cytoinsectotoxin) family. As to expression, expressed by the venom gland.

It is found in the secreted. Its function is as follows. Insecticidal and antimicrobial peptide. Has insecticidal activity against larvae of flesh fly S.carnaria. Has antibacterial activity against Gram-positive bacterium B.subtilis B-501 (MIC=1.25 uM) and Gram-negative bacterium E.coli DH5alpha (MIC=2.5 uM). The sequence is that of Cytoinsectotoxin-2c from Lachesana tarabaevi (Spider).